The primary structure comprises 178 residues: Thymidine kinase (178 aa).

13-20 (GPMFAGKS) contacts ATP. Glu85 (proton acceptor) is an active-site residue. Phe115 contributes to the substrate binding site. Positions 140 and 143 each coordinate Zn(2+). 159–163 (IEIIG) is a binding site for substrate. Zn(2+) is bound by residues Cys172 and Cys175.

Belongs to the thymidine kinase family.

It catalyses the reaction thymidine + ATP = dTMP + ADP + H(+). The chain is Thymidine kinase (TK) from Myxoma virus (strain Lausanne) (MYXV).